A 2822-amino-acid polypeptide reads, in one-letter code: Piezo-type mechanosensitive ion channel component 2 (2822 aa).

Residues Met-1–Arg-12 are Cytoplasmic-facing. A helical transmembrane segment spans residues Leu-13–Ala-24. Residues Phe-25–Leu-30 lie on the Extracellular side of the membrane. Residues Ser-31–Leu-43 traverse the membrane as a helical segment. Residues Phe-44–Ala-50 are Cytoplasmic-facing. A helical membrane pass occupies residues Thr-51–Ile-76. Residues Phe-77–Val-122 are Extracellular-facing. A glycan (N-linked (GlcNAc...) asparagine) is linked at Asn-95. A helical membrane pass occupies residues Phe-123–Arg-141. Residues Thr-142–Thr-221 are Cytoplasmic-facing. The chain crosses the membrane as a helical span at residues Ala-222–Met-237. The Extracellular portion of the chain corresponds to Leu-238 to Ser-240. A helical membrane pass occupies residues Leu-241–Ser-258. Over Trp-259–Asp-264 the chain is Cytoplasmic. Residues Pro-265 to Tyr-287 traverse the membrane as a helical segment. Residues Leu-288 to His-335 are Extracellular-facing. A helical transmembrane segment spans residues Ala-336 to Trp-355. Residues Leu-356–Val-492 are Cytoplasmic-facing. A disordered region spans residues Tyr-450–Lys-481. Residues Ser-455 to Arg-482 are a coiled coil. Residues Glu-463–Ser-477 show a composition bias toward acidic residues. Residues Phe-493–Thr-514 traverse the membrane as a helical segment. The Extracellular portion of the chain corresponds to Tyr-515 to Leu-519. The chain crosses the membrane as a helical span at residues Thr-520 to Trp-531. Residues Met-532 to Asn-535 lie on the Cytoplasmic side of the membrane. Residues Arg-536–Ser-562 traverse the membrane as a helical segment. At Phe-563–Leu-583 the chain is on the extracellular side. The chain crosses the membrane as a helical span at residues Ala-584–Leu-614. Residues Ser-615–Lys-689 lie on the Cytoplasmic side of the membrane. Composition is skewed to acidic residues over residues Leu-624 to Gln-633 and Glu-643 to Ile-652. Residues Leu-624–Glu-668 form a disordered region. The span at Lys-653 to Glu-662 shows a compositional bias: basic and acidic residues. A helical transmembrane segment spans residues Tyr-690–Ser-703. Residues Phe-704 to Val-709 lie on the Extracellular side of the membrane. The helical transmembrane segment at Met-710–Val-728 threads the bilayer. The Cytoplasmic portion of the chain corresponds to His-729–Leu-737. The helical transmembrane segment at Lys-738–Thr-757 threads the bilayer. Residues Tyr-758–Ala-789 are Extracellular-facing. Residues Glu-790–Tyr-811 form a helical membrane-spanning segment. Over Phe-812 to Leu-957 the chain is Cytoplasmic. Ser-856 is subject to Phosphoserine. Residues Gln-875–Ser-901 show a composition bias toward basic and acidic residues. The disordered stretch occupies residues Gln-875–Ser-919. Acidic residues predominate over residues Asp-902–Ser-919. A helical transmembrane segment spans residues His-958–Lys-973. The Extracellular segment spans residues Glu-974–Asn-979. Residues Tyr-980–Ala-989 form a helical membrane-spanning segment. Topologically, residues Leu-990 to Arg-997 are cytoplasmic. Residues Ala-998–Gln-1018 form a helical membrane-spanning segment. Residues Leu-1019–Leu-1074 are Extracellular-facing. Residue Asn-1030 is glycosylated (N-linked (GlcNAc...) asparagine). Cys-1031 and Cys-1209 are oxidised to a cystine. The helical transmembrane segment at Arg-1075–Gly-1099 threads the bilayer. The Cytoplasmic segment spans residues Arg-1100–Gly-1140. A helical transmembrane segment spans residues Leu-1141 to Arg-1155. Topologically, residues Met-1156–Asp-1157 are extracellular. A helical membrane pass occupies residues Phe-1158–Leu-1171. Residues Tyr-1172–Val-1182 are Cytoplasmic-facing. The helical transmembrane segment at Trp-1183–Ile-1202 threads the bilayer. Residues Gly-1203–Asn-1239 are Extracellular-facing. Residues Pro-1240–Phe-1260 traverse the membrane as a helical segment. Topologically, residues Glu-1261–Leu-1314 are cytoplasmic. Residues Phe-1315–Thr-1327 form a helical membrane-spanning segment. Topologically, residues Thr-1328 to Phe-1333 are extracellular. A helical membrane pass occupies residues Cys-1334–Leu-1346. Residues Phe-1347–Pro-1355 lie on the Cytoplasmic side of the membrane. The chain crosses the membrane as a helical span at residues Ile-1356–Ser-1381. Residues Ile-1382–Ile-1430 lie on the Extracellular side of the membrane. The chain crosses the membrane as a helical span at residues Trp-1431–Met-1447. Topologically, residues Ser-1448–Arg-1991 are cytoplasmic. The stretch at Thr-1475–Met-1515 forms a coiled coil. Disordered stretches follow at residues Gln-1505 to Gln-1551 and Leu-1611 to Asp-1653. Residues Leu-1611–Leu-1621 show a composition bias toward basic residues. Over residues Ala-1622–Ser-1633 the composition is skewed to basic and acidic residues. A helical transmembrane segment spans residues Ser-1992–Thr-2006. Residues Ser-2007 to Leu-2013 are Extracellular-facing. The helical transmembrane segment at Leu-2014 to Leu-2025 threads the bilayer. At Ser-2026–Ser-2031 the chain is on the cytoplasmic side. The chain crosses the membrane as a helical span at residues Arg-2032–Gln-2053. Residues Phe-2054–Val-2086 are Extracellular-facing. A helical transmembrane segment spans residues Leu-2087–Cys-2105. The Cytoplasmic portion of the chain corresponds to His-2106–Val-2259. 2 disordered regions span residues Asp-2120 to Asp-2139 and Ile-2164 to Ser-2205. Low complexity predominate over residues Cys-2170–Ser-2197. The chain crosses the membrane as a helical span at residues Tyr-2260–Trp-2279. The Extracellular segment spans residues Ala-2280–Gly-2301. A helical transmembrane segment spans residues Pro-2302–Leu-2322. Over Arg-2323–Val-2326 the chain is Cytoplasmic. The chain crosses the membrane as a helical span at residues Leu-2327–Gly-2350. The Extracellular segment spans residues Val-2351–Asn-2359. A helical transmembrane segment spans residues Leu-2360–Cys-2382. Residues Gly-2383–Lys-2467 lie on the Cytoplasmic side of the membrane. Residues Lys-2468–Leu-2491 traverse the membrane as a helical segment. At Phe-2492–Gly-2739 the chain is on the extracellular side. Asn-2692 is a glycosylation site (N-linked (GlcNAc...) asparagine). Residues Ile-2740 to Ser-2760 form a helical membrane-spanning segment. The Cytoplasmic portion of the chain corresponds to Gly-2761–Asn-2822.

It belongs to the PIEZO (TC 1.A.75) family. As to quaternary structure, homotrimer; the homotrimer forms a propeller-shaped Piezo channel with a cation-ion conducting pore. Heterotrimeric interaction may occur between PIEZO1 and PIEZO2. Interacts with STOM13. Interacts with TMC7; the interaction inhibits PIEZO2-conducted mechanically activated currents. Interacts with TMC1; the interaction may be part of the MET complex. Interacts with MDFIC (via C-terminus); the interaction prolongs Piezo channel inactivation. Interacts with MDFI (via C-terminus); the interaction prolongs Piezo channel inactivation. Expressed in bladder, colon, and lung, but less abundant in kidney or skin. Strong expression is observed in dorsal root ganglia (DRG) sensory neurons. Expressed in a wide range of cutaneous low-threshold mechanoreceptors (LTMRs), including Merkel cells and Meissner's corpuscles. Expressed in sensory neurons. Expressed in cochlear inner and outer hair cells and vestibular organ hair cells. Expressed in pulmonary neuroepithelial cell bodies. Expressed in bladder urothelium and sensory neurons of the lower urinary tract. Expressed in sensory endings of proprioceptors innervating muscle spindles and Golgi tendon organs.

It is found in the cell membrane. The enzyme catalyses Ca(2+)(in) = Ca(2+)(out). With respect to regulation, regulated by auxillary subunits MDFIC and MDFI. Channel activity is inhibited by TMEM120aa. Phosphatidic acid and lysophosphatidic acid inhibit Piezo2 channel activity. Pore-forming subunit of the mechanosensitive non-specific cation Piezo channel required for rapidly adapting mechanically activated (MA) currents and has a key role in sensing touch and tactile pain. Piezo channels are homotrimeric three-blade propeller-shaped structures that utilize a cap-motion and plug-and-latch mechanism to gate their ion-conducting pathways. Expressed in sensory neurons, is essential for diverse physiological processes, including respiratory control, systemic metabolism, urinary function, and proprioception. Mediates airway stretch sensing, enabling efficient respiration at birth and maintaining normal breathing in adults. It regulates brown and beige adipose tissue morphology and function, preventing systemic hypermetabolism. In the lower urinary tract, acts as a sensor in both the bladder urothelium and innervating sensory neurons and is required for bladder-stretch sensing and urethral micturition reflexes, ensuring proper urinary function. Additionally, Piezo2 serves as the principal mechanotransducer in proprioceptors, facilitating proprioception and coordinated body movements. In inner ear hair cells, PIEZO1/2 subunits may constitute part of the mechanotransducer (MET) non-selective cation channel complex where they may act as pore-forming ion-conducting component in the complex. Required for Merkel-cell mechanotransduction. Plays a major role in light-touch mechanosensation. The polypeptide is Piezo-type mechanosensitive ion channel component 2 (Mus musculus (Mouse)).